The sequence spans 304 residues: Xylanase inhibitor protein 1 (304 aa).

A signal peptide spans Met-1–Ala-29. Residues Gly-34–Ala-304 enclose the GH18 domain. Cystine bridges form between Cys-53–Cys-93 and Cys-190–Cys-219.

This sequence belongs to the glycosyl hydrolase 18 family. Xylanase inhibitor subfamily. Binds to fungal GH11 xylanases. In terms of tissue distribution, constitutively expressed in shoots.

It localises to the secreted. Its function is as follows. Fungal xylanase inhibitor. Possesses competitive inhibiting activity against fungal endo-1,4-beta-D-xylanases belonging to glycoside hydrolase family 11 (GH11). May function in plant defense against secreted fungal pathogen xylanases. Is similar to class III chitinases, but does not exhibit chitinase activity. This is Xylanase inhibitor protein 1 from Oryza sativa subsp. japonica (Rice).